Here is a 130-residue protein sequence, read N- to C-terminus: Follitropin subunit beta (130 aa).

The signal sequence occupies residues 1–20 (MMKLIQLCILFWCWRAICCH). 6 cysteine pairs are disulfide-bonded: Cys22–Cys70, Cys36–Cys85, Cys39–Cys123, Cys47–Cys101, Cys51–Cys103, and Cys106–Cys113. Asn26 and Asn43 each carry an N-linked (GlcNAc...) asparagine glycan.

This sequence belongs to the glycoprotein hormones subunit beta family. In terms of assembly, heterodimer. The active follitropin is a heterodimer composed of an alpha chain/CGA shared with other hormones and a unique beta chain/FSHB shown here.

It localises to the secreted. In terms of biological role, together with the alpha chain CGA constitutes follitropin, the follicle-stimulating hormone, and provides its biological specificity to the hormone heterodimer. Binds FSHR, a G protein-coupled receptor, on target cells to activate downstream signaling pathways. Follitropin is involved in follicle development and spermatogenesis in reproductive organs. The protein is Follitropin subunit beta (Fshb) of Mus musculus (Mouse).